Reading from the N-terminus, the 557-residue chain is Putative sensory transducer protein (557 aa).

Residues threonine 122–isoleucine 145 form a helical membrane-spanning segment. In terms of domain architecture, HAMP spans arginine 147–tyrosine 199. Residues valine 243–serine 472 enclose the Methyl-accepting transducer domain. Glutamine 268 is modified (glutamate methyl ester (Gln)). The residue at position 274 (glutamate 274) is a Glutamate methyl ester (Glu). The residue at position 281 (glutamine 281) is a Glutamate methyl ester (Gln). Residue glutamate 463 is modified to Glutamate methyl ester (Glu). Residues aspartate 511–glycine 541 are compositionally biased toward basic and acidic residues. Residues aspartate 511–glycine 542 form a disordered region.

Belongs to the methyl-accepting chemotaxis (MCP) protein family.

The protein localises to the cell membrane. Its function is as follows. May bind attractants or detect changes in the extracellular concentration of soluble sugars. The sequence is that of Putative sensory transducer protein from Acetivibrio thermocellus (strain ATCC 27405 / DSM 1237 / JCM 9322 / NBRC 103400 / NCIMB 10682 / NRRL B-4536 / VPI 7372) (Clostridium thermocellum).